The chain runs to 142 residues: Large ribosomal subunit protein uL11 (142 aa).

It belongs to the universal ribosomal protein uL11 family. In terms of assembly, part of the ribosomal stalk of the 50S ribosomal subunit. Interacts with L10 and the large rRNA to form the base of the stalk. L10 forms an elongated spine to which L12 dimers bind in a sequential fashion forming a multimeric L10(L12)X complex. Post-translationally, one or more lysine residues are methylated.

Forms part of the ribosomal stalk which helps the ribosome interact with GTP-bound translation factors. The chain is Large ribosomal subunit protein uL11 from Mesoplasma florum (strain ATCC 33453 / NBRC 100688 / NCTC 11704 / L1) (Acholeplasma florum).